The following is a 339-amino-acid chain: DNA-directed RNA polymerase subunit alpha (339 aa).

Positions 1-235 (MVIQRNWQSL…DQLQLFINFE (235 aa)) are alpha N-terminal domain (alpha-NTD). The segment at 251-339 (FNRNLLRKVD…DLAKRLEEPF (89 aa)) is alpha C-terminal domain (alpha-CTD).

The protein belongs to the RNA polymerase alpha chain family. In terms of assembly, homodimer. The RNAP catalytic core consists of 2 alpha, 1 beta, 1 beta' and 1 omega subunit. When a sigma factor is associated with the core the holoenzyme is formed, which can initiate transcription.

It catalyses the reaction RNA(n) + a ribonucleoside 5'-triphosphate = RNA(n+1) + diphosphate. Its function is as follows. DNA-dependent RNA polymerase catalyzes the transcription of DNA into RNA using the four ribonucleoside triphosphates as substrates. In Granulibacter bethesdensis (strain ATCC BAA-1260 / CGDNIH1), this protein is DNA-directed RNA polymerase subunit alpha.